Consider the following 337-residue polypeptide: ATP-dependent 6-phosphofructokinase (337 aa).

Gly11 contributes to the ATP binding site. ADP is bound at residue 21-25 (RAVVR). ATP-binding positions include 72–73 (RY) and 102–105 (GDGS). Asp103 contacts Mg(2+). 125–127 (TID) is a binding site for substrate. Asp127 functions as the Proton acceptor in the catalytic mechanism. Arg154 lines the ADP pocket. Substrate is bound by residues Arg162 and 169-171 (MGR). Residues 185 to 187 (GAD) and 214 to 216 (KNH) contribute to the ADP site. Substrate-binding positions include Glu223, Arg245, and 251–254 (HILR).

Belongs to the phosphofructokinase type A (PFKA) family. ATP-dependent PFK group I subfamily. Prokaryotic clade 'B1' sub-subfamily. Homotetramer. Requires Mg(2+) as cofactor.

Its subcellular location is the cytoplasm. The catalysed reaction is beta-D-fructose 6-phosphate + ATP = beta-D-fructose 1,6-bisphosphate + ADP + H(+). It functions in the pathway carbohydrate degradation; glycolysis; D-glyceraldehyde 3-phosphate and glycerone phosphate from D-glucose: step 3/4. Its activity is regulated as follows. Allosterically activated by ADP and other diphosphonucleosides, and allosterically inhibited by phosphoenolpyruvate. In terms of biological role, catalyzes the phosphorylation of D-fructose 6-phosphate to fructose 1,6-bisphosphate by ATP, the first committing step of glycolysis. In Streptococcus mutans serotype c (strain ATCC 700610 / UA159), this protein is ATP-dependent 6-phosphofructokinase.